Reading from the N-terminus, the 171-residue chain is Large ribosomal subunit protein uL10 (171 aa).

This sequence belongs to the universal ribosomal protein uL10 family. Part of the ribosomal stalk of the 50S ribosomal subunit. The N-terminus interacts with L11 and the large rRNA to form the base of the stalk. The C-terminus forms an elongated spine to which L12 dimers bind in a sequential fashion forming a multimeric L10(L12)X complex.

In terms of biological role, forms part of the ribosomal stalk, playing a central role in the interaction of the ribosome with GTP-bound translation factors. The chain is Large ribosomal subunit protein uL10 from Nitrosomonas eutropha (strain DSM 101675 / C91 / Nm57).